A 540-amino-acid chain; its full sequence is tRNA-2-methylthio-N(6)-dimethylallyladenosine synthase (540 aa).

One can recognise an MTTase N-terminal domain in the interval 4–120 (RSYEVRTFGC…LPVLLERARH (117 aa)). Positions 13, 49, 83, 157, 161, and 164 each coordinate [4Fe-4S] cluster. The Radical SAM core domain occupies 143–374 (RASHHSAWVS…ALQDEISWAE (232 aa)). Positions 376–468 (RALVGRRVEV…PHHLTADGPL (93 aa)) constitute a TRAM domain. Positions 480-540 (WALGRDGDGG…ADACCTPVRR (61 aa)) are disordered. 2 stretches are compositionally biased toward low complexity: residues 492 to 502 (AAAQQPADGRP) and 520 to 533 (GPAS…GADA).

This sequence belongs to the methylthiotransferase family. MiaB subfamily. Monomer. The cofactor is [4Fe-4S] cluster.

The protein resides in the cytoplasm. The enzyme catalyses N(6)-dimethylallyladenosine(37) in tRNA + (sulfur carrier)-SH + AH2 + 2 S-adenosyl-L-methionine = 2-methylsulfanyl-N(6)-dimethylallyladenosine(37) in tRNA + (sulfur carrier)-H + 5'-deoxyadenosine + L-methionine + A + S-adenosyl-L-homocysteine + 2 H(+). Its function is as follows. Catalyzes the methylthiolation of N6-(dimethylallyl)adenosine (i(6)A), leading to the formation of 2-methylthio-N6-(dimethylallyl)adenosine (ms(2)i(6)A) at position 37 in tRNAs that read codons beginning with uridine. In Frankia casuarinae (strain DSM 45818 / CECT 9043 / HFP020203 / CcI3), this protein is tRNA-2-methylthio-N(6)-dimethylallyladenosine synthase.